Reading from the N-terminus, the 190-residue chain is Iron-sulfur assembly protein 1 (190 aa).

The segment at 49–71 (PSLKPSAAGSGSTAPKPVTEREI) is disordered. Fe cation is bound by residues cysteine 116, cysteine 180, and cysteine 182.

This sequence belongs to the HesB/IscA family.

Its subcellular location is the mitochondrion matrix. In terms of biological role, involved in the assembly of mitochondrial and cytoplasmic iron-sulfur proteins. Probably involved in the binding of an intermediate of Fe/S cluster assembly. The chain is Iron-sulfur assembly protein 1 (isa1) from Schizosaccharomyces pombe (strain 972 / ATCC 24843) (Fission yeast).